The following is a 205-amino-acid chain: 3-demethoxyubiquinol 3-hydroxylase (205 aa).

The Fe cation site is built by glutamate 54, glutamate 84, histidine 87, glutamate 136, glutamate 168, and histidine 171.

The protein belongs to the COQ7 family. Fe cation is required as a cofactor.

Its subcellular location is the cell membrane. The catalysed reaction is a 5-methoxy-2-methyl-3-(all-trans-polyprenyl)benzene-1,4-diol + AH2 + O2 = a 3-demethylubiquinol + A + H2O. The protein operates within cofactor biosynthesis; ubiquinone biosynthesis. Catalyzes the hydroxylation of 2-nonaprenyl-3-methyl-6-methoxy-1,4-benzoquinol during ubiquinone biosynthesis. This Delftia acidovorans (strain DSM 14801 / SPH-1) protein is 3-demethoxyubiquinol 3-hydroxylase.